Here is a 198-residue protein sequence, read N- to C-terminus: MLVTKLAPDFKAPAVLGNNEVDEHFELSKNLGKNGAILFFWPKDFTFVCPTEIIAFDKRVKDFQEKGFNVIGVSIDSEQVHFAWKNTPVEKGGIGQVTFPMVADITKSISRDYDVLFEEAIALRGAFLIDKNMKVRHAVINDLPLGRNADEMLRMVDALLHFEEHGEVCPAGWRKGDKGMKATHQGVAEYLKENSIKL.

The Thioredoxin domain maps to 2-161 (LVTKLAPDFK…MLRMVDALLH (160 aa)). Cysteine 49 acts as the Cysteine sulfenic acid (-SOH) intermediate in catalysis.

It belongs to the peroxiredoxin family. AhpC/Prx1 subfamily. As to quaternary structure, homodimer; disulfide-linked, upon oxidation. 5 homodimers assemble to form a ring-like decamer.

The protein resides in the cytoplasm. It carries out the reaction a hydroperoxide + NADH + H(+) = an alcohol + NAD(+) + H2O. Thiol-specific peroxidase that catalyzes the reduction of hydrogen peroxide and organic hydroperoxides to water and alcohols, respectively. Plays a role in cell protection against oxidative stress by detoxifying peroxides. The protein is Alkyl hydroperoxide reductase C (ahpC) of Helicobacter pylori (strain ATCC 700392 / 26695) (Campylobacter pylori).